The primary structure comprises 22 residues: 2.39 kDa venom peptide (22 aa).

Contains 2 disulfide bonds. As to expression, expressed by the venom gland.

The protein localises to the secreted. In terms of biological role, not lethal to mice by intraperitoneal or intracerebroventricular injections in doses up to 100 micrograms. In Heterometrus spinifer (Asia giant forest scorpion), this protein is 2.39 kDa venom peptide.